Reading from the N-terminus, the 334-residue chain is Sensor protein BceS (334 aa).

Over 1–12 the chain is Cytoplasmic; sequence MIKAFLIERRSW. The helical transmembrane segment at 13–33 threads the bilayer; the sequence is IAAFLFQQALMLFIAFVDPSI. A topological domain (extracellular) is located at residue Ser-34. Residues 35 to 55 form a helical membrane-spanning segment; the sequence is FGNVLYMVYLCILFFIIFLWF. Topologically, residues 56–334 are cytoplasmic; that stretch reads RYRKETAFYK…RNQFEHVISV (279 aa). Residues 121-326 enclose the Histidine kinase domain; sequence AWIHEVKTPL…VFTLTFPIRN (206 aa). Residue His-124 is modified to Phosphohistidine; by autocatalysis.

Its subcellular location is the cell membrane. The enzyme catalyses ATP + protein L-histidine = ADP + protein N-phospho-L-histidine.. Member of the two-component regulatory system BceS/BceR involved in the regulation of bacitracin resistance. Activates BceR in response to extracellular bacitracin. The protein is Sensor protein BceS (bceS) of Bacillus subtilis (strain 168).